The primary structure comprises 454 residues: CCA-adding enzyme (454 aa).

ATP is bound by residues S59 and R62. Positions 59 and 62 each coordinate CTP. Mg(2+)-binding residues include D71, D73, and D125. Residues H148, K167, and Y176 each coordinate ATP. H148, K167, and Y176 together coordinate CTP.

Belongs to the tRNA nucleotidyltransferase/poly(A) polymerase family. Archaeal CCA-adding enzyme subfamily. Homodimer. Mg(2+) is required as a cofactor.

The enzyme catalyses a tRNA precursor + 2 CTP + ATP = a tRNA with a 3' CCA end + 3 diphosphate. It catalyses the reaction a tRNA with a 3' CCA end + 2 CTP + ATP = a tRNA with a 3' CCACCA end + 3 diphosphate. Its function is as follows. Catalyzes the addition and repair of the essential 3'-terminal CCA sequence in tRNAs without using a nucleic acid template. Adds these three nucleotides in the order of C, C, and A to the tRNA nucleotide-73, using CTP and ATP as substrates and producing inorganic pyrophosphate. tRNA 3'-terminal CCA addition is required both for tRNA processing and repair. Also involved in tRNA surveillance by mediating tandem CCA addition to generate a CCACCA at the 3' terminus of unstable tRNAs. While stable tRNAs receive only 3'-terminal CCA, unstable tRNAs are marked with CCACCA and rapidly degraded. The chain is CCA-adding enzyme from Methanosarcina mazei (strain ATCC BAA-159 / DSM 3647 / Goe1 / Go1 / JCM 11833 / OCM 88) (Methanosarcina frisia).